The following is a 213-amino-acid chain: Alkylbase DNA glycosidase-like protein mag2 (213 aa).

DNA-binding residues include Lys53, Leu54, Ser61, His91, Gly94, Ser96, Lys97, Lys99, Glu102, Lys137, Gly138, Lys140, Thr143, Ser163, and Thr164.

This sequence belongs to the alkylbase DNA glycosidase AlkA family.

The protein localises to the nucleus. Its function is as follows. Alkylbase DNA glycosidase-like protein that shows no DNA glycosylase activity for alkylated bases. The molecular role of mag2 appears to be abasic (AP) site recognition and protection, while possibly facilitating damage signaling by structurally sculpting the DNA substrate. Stimulates AP site binding to mismatch repair protein mutS. The sequence is that of Alkylbase DNA glycosidase-like protein mag2 from Schizosaccharomyces pombe (strain 972 / ATCC 24843) (Fission yeast).